A 275-amino-acid chain; its full sequence is Large ribosomal subunit protein uL2 (275 aa).

The disordered stretch occupies residues 223–260 (VAMNPVDHPHGGGEGRTSGGRHPVSPWGLPTKGYKTRS).

It belongs to the universal ribosomal protein uL2 family. As to quaternary structure, part of the 50S ribosomal subunit. Forms a bridge to the 30S subunit in the 70S ribosome.

One of the primary rRNA binding proteins. Required for association of the 30S and 50S subunits to form the 70S ribosome, for tRNA binding and peptide bond formation. It has been suggested to have peptidyltransferase activity; this is somewhat controversial. Makes several contacts with the 16S rRNA in the 70S ribosome. The protein is Large ribosomal subunit protein uL2 of Legionella pneumophila (strain Lens).